A 248-amino-acid polypeptide reads, in one-letter code: tRNA1(Val) (adenine(37)-N6)-methyltransferase (248 aa).

It belongs to the methyltransferase superfamily. tRNA (adenine-N(6)-)-methyltransferase family.

It localises to the cytoplasm. It catalyses the reaction adenosine(37) in tRNA1(Val) + S-adenosyl-L-methionine = N(6)-methyladenosine(37) in tRNA1(Val) + S-adenosyl-L-homocysteine + H(+). Specifically methylates the adenine in position 37 of tRNA(1)(Val) (anticodon cmo5UAC). The chain is tRNA1(Val) (adenine(37)-N6)-methyltransferase from Pectobacterium carotovorum subsp. carotovorum (strain PC1).